Here is a 102-residue protein sequence, read N- to C-terminus: Synaptobrevin-like protein 5 (102 aa).

The v-SNARE coiled-coil homology domain occupies 17 to 77 (KIMRTRRELD…VKIKREMSWK (61 aa)).

The polypeptide is Synaptobrevin-like protein 5 (snb-5) (Caenorhabditis elegans).